A 551-amino-acid polypeptide reads, in one-letter code: Trehalose-6-phosphate hydrolase (551 aa).

The Nucleophile role is filled by Asp200. Catalysis depends on Glu251, which acts as the Proton donor.

The protein belongs to the glycosyl hydrolase 13 family.

Its subcellular location is the cytoplasm. The enzyme catalyses alpha,alpha-trehalose 6-phosphate + H2O = D-glucose 6-phosphate + D-glucose. In terms of biological role, hydrolyzes trehalose-6-phosphate to glucose and glucose 6-phosphate. Can also very effectively hydrolyze p-nitrophenyl-alpha-D-glucopyranoside, but it does not recognize trehalose, sucrose, maltose, isomaltose, or maltodextrins. This chain is Trehalose-6-phosphate hydrolase (treC), found in Escherichia coli (strain K12).